The primary structure comprises 308 residues: Cytochrome b (308 aa).

4 consecutive transmembrane segments (helical) span residues Phe1–Met21, Trp45–Ile66, Trp81–Leu101, and Phe146–Thr166. Heme b contacts are provided by His51 and His65. 2 residues coordinate heme b: His150 and His164. His169 provides a ligand contact to a ubiquinone. 3 consecutive transmembrane segments (helical) span residues Thr194–Ser214, Leu256–His276, and Leu288–Ser308.

Belongs to the cytochrome b family. In terms of assembly, the cytochrome bc1 complex contains 11 subunits: 3 respiratory subunits (MT-CYB, CYC1 and UQCRFS1), 2 core proteins (UQCRC1 and UQCRC2) and 6 low-molecular weight proteins (UQCRH/QCR6, UQCRB/QCR7, UQCRQ/QCR8, UQCR10/QCR9, UQCR11/QCR10 and a cleavage product of UQCRFS1). This cytochrome bc1 complex then forms a dimer. Requires heme b as cofactor.

The protein localises to the mitochondrion inner membrane. Component of the ubiquinol-cytochrome c reductase complex (complex III or cytochrome b-c1 complex) that is part of the mitochondrial respiratory chain. The b-c1 complex mediates electron transfer from ubiquinol to cytochrome c. Contributes to the generation of a proton gradient across the mitochondrial membrane that is then used for ATP synthesis. The sequence is that of Cytochrome b (MT-CYB) from Baeolophus inornatus (Oak titmouse).